Consider the following 49-residue polypeptide: Venom peptide 3 (49 aa).

Positions 1-23 (MRFTFVLVIAATVAVLGFFGINA) are cleaved as a signal peptide. AXPX repeat units follow at residues 23 to 26 (AEPM) and 31 to 34 (AEPY). Residues 24-37 (EPMPDPHAEPYPDA) constitute a propeptide that is removed on maturation. Position 48 is a leucine amide (Leu-48).

In terms of tissue distribution, expressed by the venom gland.

It is found in the secreted. This chain is Venom peptide 3, found in Eumenes pomiformis (Potter wasp).